A 332-amino-acid chain; its full sequence is Probable farnesyl diphosphate synthase (332 aa).

Isopentenyl diphosphate is bound by residues lysine 75, arginine 78, and histidine 107. Mg(2+)-binding residues include aspartate 114 and aspartate 120. Position 125 (arginine 125) interacts with (2E)-geranyl diphosphate. Arginine 126 serves as a coordination point for isopentenyl diphosphate. (2E)-geranyl diphosphate-binding residues include lysine 208, serine 209, glutamine 250, and lysine 267.

Belongs to the FPP/GGPP synthase family. It depends on Mg(2+) as a cofactor.

The protein localises to the cytoplasm. It carries out the reaction isopentenyl diphosphate + (2E)-geranyl diphosphate = (2E,6E)-farnesyl diphosphate + diphosphate. This Bradyrhizobium diazoefficiens (strain JCM 10833 / BCRC 13528 / IAM 13628 / NBRC 14792 / USDA 110) protein is Probable farnesyl diphosphate synthase (fppS).